The following is a 250-amino-acid chain: Peptidyl-tRNA hydrolase (250 aa).

A tRNA-binding site is contributed by Y14. Residue H19 is the Proton acceptor of the active site. The tRNA site is built by F64, N66, and N112. Residues 192–250 (MGDGNQRPGGVKTDPAQLEKAPPKAQSHIRQARQNQKKPNIPESGPMAEMLKKLLGKKD) form a disordered region. Residues 219–229 (HIRQARQNQKK) are compositionally biased toward polar residues. Over residues 241-250 (MLKKLLGKKD) the composition is skewed to basic and acidic residues.

This sequence belongs to the PTH family. In terms of assembly, monomer.

The protein resides in the cytoplasm. It carries out the reaction an N-acyl-L-alpha-aminoacyl-tRNA + H2O = an N-acyl-L-amino acid + a tRNA + H(+). Its function is as follows. Hydrolyzes ribosome-free peptidyl-tRNAs (with 1 or more amino acids incorporated), which drop off the ribosome during protein synthesis, or as a result of ribosome stalling. Catalyzes the release of premature peptidyl moieties from peptidyl-tRNA molecules trapped in stalled 50S ribosomal subunits, and thus maintains levels of free tRNAs and 50S ribosomes. This Brucella abortus (strain 2308) protein is Peptidyl-tRNA hydrolase.